The primary structure comprises 278 residues: NAD kinase (278 aa).

The Proton acceptor role is filled by D56. NAD(+) contacts are provided by residues 56-57 (DG), 132-133 (NE), R158, D160, and 171-176 (TAYNKS).

Belongs to the NAD kinase family. A divalent metal cation is required as a cofactor.

It is found in the cytoplasm. The catalysed reaction is NAD(+) + ATP = ADP + NADP(+) + H(+). Functionally, involved in the regulation of the intracellular balance of NAD and NADP, and is a key enzyme in the biosynthesis of NADP. Catalyzes specifically the phosphorylation on 2'-hydroxyl of the adenosine moiety of NAD to yield NADP. The sequence is that of NAD kinase from Streptococcus pyogenes serotype M1.